Here is a 188-residue protein sequence, read N- to C-terminus: Ribosome-recycling factor (188 aa).

It belongs to the RRF family.

The protein resides in the cytoplasm. Functionally, responsible for the release of ribosomes from messenger RNA at the termination of protein biosynthesis. May increase the efficiency of translation by recycling ribosomes from one round of translation to another. The sequence is that of Ribosome-recycling factor from Bradyrhizobium diazoefficiens (strain JCM 10833 / BCRC 13528 / IAM 13628 / NBRC 14792 / USDA 110).